A 715-amino-acid polypeptide reads, in one-letter code: Beta-galactosidase 9 (715 aa).

Positions 1–20 (MSGGAVAFLLLVAAAAVANA) are cleaved as a signal peptide. The active-site Proton donor is the E178. Catalysis depends on E247, which acts as the Nucleophile.

This sequence belongs to the glycosyl hydrolase 35 family.

Its subcellular location is the secreted. It is found in the extracellular space. It localises to the apoplast. It catalyses the reaction Hydrolysis of terminal non-reducing beta-D-galactose residues in beta-D-galactosides.. This Oryza sativa subsp. japonica (Rice) protein is Beta-galactosidase 9.